A 293-amino-acid polypeptide reads, in one-letter code: Formamidopyrimidine-DNA glycosylase (293 aa).

The Schiff-base intermediate with DNA role is filled by Pro2. The active-site Proton donor is the Glu3. Lys58 (proton donor; for beta-elimination activity) is an active-site residue. Residues His104, Arg123, and Arg166 each coordinate DNA. The FPG-type zinc-finger motif lies at 257–293 (KVYDREGEPCPTLRCKGHVQRIVQAGRSTFFCATCQR). Arg283 functions as the Proton donor; for delta-elimination activity in the catalytic mechanism.

It belongs to the FPG family. In terms of assembly, monomer. The cofactor is Zn(2+).

It catalyses the reaction Hydrolysis of DNA containing ring-opened 7-methylguanine residues, releasing 2,6-diamino-4-hydroxy-5-(N-methyl)formamidopyrimidine.. The catalysed reaction is 2'-deoxyribonucleotide-(2'-deoxyribose 5'-phosphate)-2'-deoxyribonucleotide-DNA = a 3'-end 2'-deoxyribonucleotide-(2,3-dehydro-2,3-deoxyribose 5'-phosphate)-DNA + a 5'-end 5'-phospho-2'-deoxyribonucleoside-DNA + H(+). Its function is as follows. Involved in base excision repair of DNA damaged by oxidation or by mutagenic agents. Acts as a DNA glycosylase that recognizes and removes damaged bases. Has a preference for oxidized purines, such as 7,8-dihydro-8-oxoguanine (8-oxoG). Has AP (apurinic/apyrimidinic) lyase activity and introduces nicks in the DNA strand. Cleaves the DNA backbone by beta-delta elimination to generate a single-strand break at the site of the removed base with both 3'- and 5'-phosphates. The protein is Formamidopyrimidine-DNA glycosylase of Azorhizobium caulinodans (strain ATCC 43989 / DSM 5975 / JCM 20966 / LMG 6465 / NBRC 14845 / NCIMB 13405 / ORS 571).